The primary structure comprises 231 residues: Orotidine 5'-phosphate decarboxylase (231 aa).

Substrate-binding positions include Asp-12, Lys-34, 61-70, Thr-120, Arg-181, Gln-190, Gly-210, and Arg-211; that span reads DLKFHDIPNT. The Proton donor role is filled by Lys-63.

Belongs to the OMP decarboxylase family. Type 1 subfamily. As to quaternary structure, homodimer.

The catalysed reaction is orotidine 5'-phosphate + H(+) = UMP + CO2. It participates in pyrimidine metabolism; UMP biosynthesis via de novo pathway; UMP from orotate: step 2/2. In terms of biological role, catalyzes the decarboxylation of orotidine 5'-monophosphate (OMP) to uridine 5'-monophosphate (UMP). The chain is Orotidine 5'-phosphate decarboxylase from Alcanivorax borkumensis (strain ATCC 700651 / DSM 11573 / NCIMB 13689 / SK2).